Here is a 748-residue protein sequence, read N- to C-terminus: CCR4-NOT transcription complex subunit 10-B (748 aa).

The segment covering 1 to 16 has biased composition (basic and acidic residues); sequence MAADKAGEQGAEKHEG. Disordered stretches follow at residues 1 to 25, 483 to 524, and 605 to 634; these read MAADKAGEQGAEKHEGSANCSGISD, KQEN…PPSS, and VSLGVSSNEQEQGSDKGENEPMESAGKQIP. Polar residues-rich tracts occupy residues 487-509 and 605-615; these read GSKASSQTVNTDSSGESSDVCSN and VSLGVSSNEQE.

Belongs to the CNOT10 family. In terms of assembly, component of the CCR4-NOT complex. cnot10 and cnot11 form a subcomplex docked to the cnot1 scaffold.

The protein localises to the cytoplasm. It localises to the nucleus. Functionally, component of the CCR4-NOT complex which is one of the major cellular mRNA deadenylases and is linked to various cellular processes including bulk mRNA degradation, miRNA-mediated repression, translational repression during translational initiation and general transcription regulation. Additional complex functions may be a consequence of its influence on mRNA expression. Is not required for association of CNOT7 to the CCR4-NOT complex. This Xenopus laevis (African clawed frog) protein is CCR4-NOT transcription complex subunit 10-B (cnot10-b).